The following is a 200-amino-acid chain: ATP-dependent Clp protease proteolytic subunit (200 aa).

Ser104 (nucleophile) is an active-site residue. The active site involves His129.

It belongs to the peptidase S14 family. In terms of assembly, fourteen ClpP subunits assemble into 2 heptameric rings which stack back to back to give a disk-like structure with a central cavity, resembling the structure of eukaryotic proteasomes.

The protein localises to the cytoplasm. It carries out the reaction Hydrolysis of proteins to small peptides in the presence of ATP and magnesium. alpha-casein is the usual test substrate. In the absence of ATP, only oligopeptides shorter than five residues are hydrolyzed (such as succinyl-Leu-Tyr-|-NHMec, and Leu-Tyr-Leu-|-Tyr-Trp, in which cleavage of the -Tyr-|-Leu- and -Tyr-|-Trp bonds also occurs).. In terms of biological role, cleaves peptides in various proteins in a process that requires ATP hydrolysis. Has a chymotrypsin-like activity. Plays a major role in the degradation of misfolded proteins. In Rubrobacter xylanophilus (strain DSM 9941 / JCM 11954 / NBRC 16129 / PRD-1), this protein is ATP-dependent Clp protease proteolytic subunit.